We begin with the raw amino-acid sequence, 169 residues long: 2-C-methyl-D-erythritol 2,4-cyclodiphosphate synthase (169 aa).

A divalent metal cation contacts are provided by D13 and H15. 4-CDP-2-C-methyl-D-erythritol 2-phosphate-binding positions include 13 to 15 (DVH) and 39 to 40 (HS). An a divalent metal cation-binding site is contributed by H47. Residues 61 to 63 (DIG), 66 to 70 (FPDTD), F144, and R147 contribute to the 4-CDP-2-C-methyl-D-erythritol 2-phosphate site.

The protein belongs to the IspF family. Homotrimer. It depends on a divalent metal cation as a cofactor.

The enzyme catalyses 4-CDP-2-C-methyl-D-erythritol 2-phosphate = 2-C-methyl-D-erythritol 2,4-cyclic diphosphate + CMP. It functions in the pathway isoprenoid biosynthesis; isopentenyl diphosphate biosynthesis via DXP pathway; isopentenyl diphosphate from 1-deoxy-D-xylulose 5-phosphate: step 4/6. Functionally, involved in the biosynthesis of isopentenyl diphosphate (IPP) and dimethylallyl diphosphate (DMAPP), two major building blocks of isoprenoid compounds. Catalyzes the conversion of 4-diphosphocytidyl-2-C-methyl-D-erythritol 2-phosphate (CDP-ME2P) to 2-C-methyl-D-erythritol 2,4-cyclodiphosphate (ME-CPP) with a corresponding release of cytidine 5-monophosphate (CMP). This is 2-C-methyl-D-erythritol 2,4-cyclodiphosphate synthase from Cupriavidus pinatubonensis (strain JMP 134 / LMG 1197) (Cupriavidus necator (strain JMP 134)).